Here is a 288-residue protein sequence, read N- to C-terminus: Phenazine biosynthesis-like domain-containing protein (288 aa).

Glu-46 is a catalytic residue.

The protein belongs to the PhzF family. In terms of assembly, interacts with UNRIP/MAWD.

In Bos taurus (Bovine), this protein is Phenazine biosynthesis-like domain-containing protein (PBLD).